The following is a 259-amino-acid chain: 1,2-dihydroxy-1,2-dihydronaphthalene dehydrogenase (259 aa).

An NAD(+)-binding site is contributed by 8–32; it reads SITGAGSGIGLELVRSFKSAGYYVS. Ser-140 contributes to the substrate binding site. Tyr-153 serves as the catalytic Proton acceptor.

This sequence belongs to the short-chain dehydrogenases/reductases (SDR) family.

The enzyme catalyses (1R,2S)-1,2-dihydronaphthalene-1,2-diol + NAD(+) = naphthalene-1,2-diol + NADH + H(+). It catalyses the reaction cis-1,2-dihydroxy-1,2-dihydrodibenzothiophene + NAD(+) = 1,2-dihydroxydibenzothiophene + NADH + H(+). It functions in the pathway aromatic compound metabolism; naphthalene degradation. In terms of biological role, catalyzes the oxidation of naphthalene dihydrodiol into 1,2-dihydroxynaphthalene. In Pseudomonas putida (Arthrobacter siderocapsulatus), this protein is 1,2-dihydroxy-1,2-dihydronaphthalene dehydrogenase (nahB).